The following is a 450-amino-acid chain: MNASDTIAAVATAVAPGQGGIAVVRVSGPAAEATGRSVVHCPGRQVCGSHRVMYGHVIDGEGRRLDEVLLLLMRGPRSFTGEDVVEIHCHGGVVAVQQVLERVLAHPGVRRALPGEFSQRAVLNGRLDLTRAEAVSELVAARSRRAAELAMAGLDGGIQAKITALRERLLDQLTELEARVDFEEDLPPLDGDALLDGLQQVRQALLTLVADGERADALRSGLRVALVGRPNVGKSSLLNRLSRRERAIVTELPGTTRDLLESEIVLEGVPITLLDTAGIRSTDDAVEQLGIARSEEALATADVVLLVLDGHAGWTAEDAALLARIPEHIPRILVANKADLPAGALPQPVDVQLSALEGTGEEDLVQALLERCGAAGTEGVLLALNERQRDLAATAAAALGRSQEVAAQQLPWDFWTIDLREAIRALGEITGEELTEAVLDRVFSRFCIGK.

Positions 25, 86, and 126 each coordinate (6S)-5-formyl-5,6,7,8-tetrahydrofolate. Residues 221–373 (GLRVALVGRP…LVQALLERCG (153 aa)) enclose the TrmE-type G domain. N231 provides a ligand contact to K(+). GTP is bound by residues 231 to 236 (NVGKSS), 250 to 256 (TELPGTT), 275 to 278 (DTAG), and 336 to 339 (NKAD). S235 contacts Mg(2+). Residues T250, L252, and T255 each coordinate K(+). T256 serves as a coordination point for Mg(2+). Residue K450 participates in (6S)-5-formyl-5,6,7,8-tetrahydrofolate binding.

This sequence belongs to the TRAFAC class TrmE-Era-EngA-EngB-Septin-like GTPase superfamily. TrmE GTPase family. In terms of assembly, homodimer. Heterotetramer of two MnmE and two MnmG subunits. K(+) is required as a cofactor.

The protein resides in the cytoplasm. Its function is as follows. Exhibits a very high intrinsic GTPase hydrolysis rate. Involved in the addition of a carboxymethylaminomethyl (cmnm) group at the wobble position (U34) of certain tRNAs, forming tRNA-cmnm(5)s(2)U34. The chain is tRNA modification GTPase MnmE from Parasynechococcus marenigrum (strain WH8102).